A 147-amino-acid polypeptide reads, in one-letter code: MINDDLIVLLEPIIKNMGYELWGCEYLSQGKHSLLRIYIDKPDGIGIDDCQEVSKQVSAMLDVEDPIPGHYSLEISSPGIPRPLFSIWQYQRYLGYEIHVKTFKPVNGKRKLSGIIVSASGDTIVLDINNEHQEILLSNIVKANLTV.

This sequence belongs to the RimP family.

The protein localises to the cytoplasm. Functionally, required for maturation of 30S ribosomal subunits. This chain is Ribosome maturation factor RimP, found in Legionella pneumophila (strain Lens).